Reading from the N-terminus, the 691-residue chain is ATP-dependent zinc metalloprotease FtsH 2 (691 aa).

Positions 1–48 (MTDEPQSDEQQTTEQERPLGTKRATRADGLRRPGVRSGLAERRSPAAD) are disordered. The Cytoplasmic portion of the chain corresponds to 1 to 64 (MTDEPQSDEQ…AAVRRFLLRD (64 aa)). A compositionally biased stretch (basic and acidic residues) spans 14 to 31 (EQERPLGTKRATRADGLR). The chain crosses the membrane as a helical span at residues 65-85 (VFALGLMIAALVIVILFFTLL). Over 86–168 (GATKPTSSGT…AVKQQPGKAQ (83 aa)) the chain is Extracellular. A helical membrane pass occupies residues 169-189 (VTIVVQFLLPILLLVCLFALF). Topologically, residues 190–691 (MRIGQDGGAG…ERGSARDRDA (502 aa)) are cytoplasmic. 265–272 (GPPGTGKT) is an ATP binding site. His-486 provides a ligand contact to Zn(2+). Residue Glu-487 is part of the active site. Positions 490 and 563 each coordinate Zn(2+).

This sequence in the central section; belongs to the AAA ATPase family. The protein in the C-terminal section; belongs to the peptidase M41 family. In terms of assembly, homohexamer. Requires Zn(2+) as cofactor.

It is found in the cell membrane. Acts as a processive, ATP-dependent zinc metallopeptidase for both cytoplasmic and membrane proteins. Plays a role in the quality control of integral membrane proteins. This is ATP-dependent zinc metalloprotease FtsH 2 from Conexibacter woesei (strain DSM 14684 / CCUG 47730 / CIP 108061 / JCM 11494 / NBRC 100937 / ID131577).